A 261-amino-acid chain; its full sequence is Carnitinyl-CoA dehydratase (261 aa).

Catalysis depends on glutamate 111, which acts as the Nucleophile. Glutamate 131 serves as the catalytic Proton acceptor.

This sequence belongs to the enoyl-CoA hydratase/isomerase family.

The enzyme catalyses (R)-carnitinyl-CoA = crotonobetainyl-CoA + H2O. Its pathway is amine and polyamine metabolism; carnitine metabolism. Functionally, catalyzes the reversible dehydration of L-carnitinyl-CoA to crotonobetainyl-CoA. This is Carnitinyl-CoA dehydratase from Salmonella typhimurium (strain LT2 / SGSC1412 / ATCC 700720).